The primary structure comprises 116 residues: Phosphoribosyl-AMP cyclohydrolase (116 aa).

Position 85 (Asp-85) interacts with Mg(2+). Zn(2+) is bound at residue Cys-86. The Mg(2+) site is built by Asp-87 and Asp-89. Residues Cys-102 and Cys-109 each coordinate Zn(2+).

This sequence belongs to the PRA-CH family. As to quaternary structure, homodimer. It depends on Mg(2+) as a cofactor. Requires Zn(2+) as cofactor.

Its subcellular location is the cytoplasm. It catalyses the reaction 1-(5-phospho-beta-D-ribosyl)-5'-AMP + H2O = 1-(5-phospho-beta-D-ribosyl)-5-[(5-phospho-beta-D-ribosylamino)methylideneamino]imidazole-4-carboxamide. It participates in amino-acid biosynthesis; L-histidine biosynthesis; L-histidine from 5-phospho-alpha-D-ribose 1-diphosphate: step 3/9. Its function is as follows. Catalyzes the hydrolysis of the adenine ring of phosphoribosyl-AMP. The chain is Phosphoribosyl-AMP cyclohydrolase from Corynebacterium diphtheriae (strain ATCC 700971 / NCTC 13129 / Biotype gravis).